The following is a 299-amino-acid chain: GTPase Era (299 aa).

One can recognise an Era-type G domain in the interval 5–175; the sequence is RSGFVCFVGR…TDVLAGKLPP (171 aa). Residues 13 to 20 are G1; it reads GRPNTGKS. 13 to 20 provides a ligand contact to GTP; the sequence is GRPNTGKS. The segment at 39–43 is G2; it reads QTTRH. A G3 region spans residues 60-63; that stretch reads DTPG. Residues 60–64 and 124–127 contribute to the GTP site; these read DTPGL and TKID. Residues 124–127 form a G4 region; the sequence is TKID. Positions 154–156 are G5; sequence VSA. In terms of domain architecture, KH type-2 spans 206 to 285; sequence VRDELPHSLA…YLDLRVKIAK (80 aa).

This sequence belongs to the TRAFAC class TrmE-Era-EngA-EngB-Septin-like GTPase superfamily. Era GTPase family. Monomer.

It localises to the cell envelope. The protein resides in the secreted. Its subcellular location is the cell wall. Its function is as follows. Exhibits GTPase activity. Binds RNA but is probably not involved in ribosome assembly in mycobacteria. The chain is GTPase Era from Mycobacterium sp. (strain JLS).